The following is a 482-amino-acid chain: Adenylyltransferase and sulfurtransferase MOCS3-2 (482 aa).

ATP contacts are provided by residues G125, D146, 153–157, K170, and 214–215; these read NNLHR and DN. C255 and C258 together coordinate Zn(2+). The Glycyl thioester intermediate; for adenylyltransferase activity role is filled by C272. Zn(2+) contacts are provided by C330 and C333. The 96-residue stretch at 385-480 folds into the Rhodanese domain; that stretch reads DGEPHLLLDV…WGQDVDPDFP (96 aa). The Cysteine persulfide intermediate; for sulfurtransferase activity role is filled by C440.

The protein in the N-terminal section; belongs to the HesA/MoeB/ThiF family. UBA4 subfamily. It depends on Zn(2+) as a cofactor.

It localises to the cytoplasm. It catalyses the reaction [molybdopterin-synthase sulfur-carrier protein]-C-terminal Gly-Gly + ATP + H(+) = [molybdopterin-synthase sulfur-carrier protein]-C-terminal Gly-Gly-AMP + diphosphate. The enzyme catalyses [molybdopterin-synthase sulfur-carrier protein]-C-terminal Gly-Gly-AMP + S-sulfanyl-L-cysteinyl-[cysteine desulfurase] + AH2 = [molybdopterin-synthase sulfur-carrier protein]-C-terminal-Gly-aminoethanethioate + L-cysteinyl-[cysteine desulfurase] + A + AMP + 2 H(+). The protein operates within tRNA modification; 5-methoxycarbonylmethyl-2-thiouridine-tRNA biosynthesis. It participates in cofactor biosynthesis; molybdopterin biosynthesis. In terms of biological role, plays a central role in 2-thiolation of mcm(5)S(2)U at tRNA wobble positions of cytosolic tRNA(Lys), tRNA(Glu) and tRNA(Gln). Also essential during biosynthesis of the molybdenum cofactor. Acts by mediating the C-terminal thiocarboxylation of sulfur carriers URM1 and MOCS2A. Its N-terminus first activates URM1 and MOCS2A as acyl-adenylates (-COAMP), then the persulfide sulfur on the catalytic cysteine is transferred to URM1 and MOCS2A to form thiocarboxylation (-COSH) of their C-terminus. The reaction probably involves hydrogen sulfide that is generated from the persulfide intermediate and that acts as a nucleophile towards URM1 and MOCS2A. Subsequently, a transient disulfide bond is formed. Does not use thiosulfate as sulfur donor; NFS1 probably acting as a sulfur donor for thiocarboxylation reactions. The protein is Adenylyltransferase and sulfurtransferase MOCS3-2 of Zea mays (Maize).